A 99-amino-acid polypeptide reads, in one-letter code: NADH-quinone oxidoreductase subunit K (99 aa).

3 consecutive transmembrane segments (helical) span residues 3–23 (PDNY…GVLL), 28–48 (IVMF…FVTF), and 59–79 (VVAF…LAII).

The protein belongs to the complex I subunit 4L family. In terms of assembly, NDH-1 is composed of 14 different subunits. Subunits NuoA, H, J, K, L, M, N constitute the membrane sector of the complex.

It localises to the cell membrane. The catalysed reaction is a quinone + NADH + 5 H(+)(in) = a quinol + NAD(+) + 4 H(+)(out). In terms of biological role, NDH-1 shuttles electrons from NADH, via FMN and iron-sulfur (Fe-S) centers, to quinones in the respiratory chain. The immediate electron acceptor for the enzyme in this species is believed to be a menaquinone. Couples the redox reaction to proton translocation (for every two electrons transferred, four hydrogen ions are translocated across the cytoplasmic membrane), and thus conserves the redox energy in a proton gradient. The chain is NADH-quinone oxidoreductase subunit K from Mycolicibacterium vanbaalenii (strain DSM 7251 / JCM 13017 / BCRC 16820 / KCTC 9966 / NRRL B-24157 / PYR-1) (Mycobacterium vanbaalenii).